A 533-amino-acid chain; its full sequence is Ribonuclease Y (533 aa).

A disordered region spans residues 16 to 41 (VERIRRRAEQDAAEQTERVRREAEQI). Positions 22 to 41 (RAEQDAAEQTERVRREAEQI) are enriched in basic and acidic residues. Positions 223–289 (VVSVLHLPSD…RITLTALVSD (67 aa)) constitute a KH domain. The HD domain occupies 349-442 (VLAHLVESAH…TQAADQISGG (94 aa)).

The protein belongs to the RNase Y family.

In terms of biological role, endoribonuclease that initiates mRNA decay. In Parafrankia sp. (strain EAN1pec), this protein is Ribonuclease Y.